Here is a 145-residue protein sequence, read N- to C-terminus: MRTTYMAKPNEVERKWYVVDAAGKTLGRLASEVAAILRGKHKPTFTPHVDCGDHVIIINAEKIELTGKKLTKKLYYRHSLHPGGLKVRTALEMRTNYPEQMLERAIRGMLPKGRLGRQMFKKLHVYRGSEHPHQAQKPEVYELRG.

This sequence belongs to the universal ribosomal protein uL13 family. In terms of assembly, part of the 50S ribosomal subunit.

Functionally, this protein is one of the early assembly proteins of the 50S ribosomal subunit, although it is not seen to bind rRNA by itself. It is important during the early stages of 50S assembly. This chain is Large ribosomal subunit protein uL13, found in Geobacillus sp. (strain WCH70).